We begin with the raw amino-acid sequence, 827 residues long: DNA-binding protein RAP1 (827 aa).

Disordered regions lie at residues 29 to 128 (SAAV…PLSN), 221 to 268 (LQEE…KVMV), and 308 to 339 (QKDT…ADEG). Polar residues predominate over residues 44 to 57 (ANQNEENTGATAAE). Residues 58–72 (TSEKVDQTEVEKKDD) are compositionally biased toward basic and acidic residues. Residues 92–107 (ATANIASTSGASVTEP) show a composition bias toward polar residues. Positions 121–208 (VSGPPLSNMK…SLLNMENYLV (88 aa)) constitute a BRCT domain. Residues 227 to 237 (SNGVDNSNSNS) are compositionally biased toward low complexity. The segment covering 238 to 247 (DNKDSIRPKT) has biased composition (basic and acidic residues). Residues 249 to 260 (IISTNTNGATED) are compositionally biased toward polar residues. Low complexity predominate over residues 310–319 (DTSNNNNSNV). Residues 326-339 (LLTQDNNPQTADEG) show a composition bias toward polar residues. The 61-residue stretch at 355 to 415 (LPSHNKASFT…RFRVYLSKRL (61 aa)) folds into the HTH myb-type domain. The H-T-H motif DNA-binding region spans 388–411 (YDEISHYVPNHTGNSIRHRFRVYL). At Thr-486 the chain carries Phosphothreonine. The interval 567–613 (QNREPEPMKNLTNRPKRPGVPTPGNYNSAAKRARNYSSQRNVQPTAN) is disordered. A compositionally biased stretch (polar residues) spans 601–611 (NYSSQRNVQPT). The tract at residues 630 to 695 (SYAIPENELL…IDPDTISFPP (66 aa)) is activation domain. Ser-731 is modified (phosphoserine).

It belongs to the RAP1 family. In terms of assembly, interacts (via C-terminus) with RIF1. Interacts (via C-terminus) with SIR3. Interacts (via C-terminus) with SIR4. Interacts with a GCR1 homodimer.

It is found in the nucleus. Its subcellular location is the chromosome. The protein localises to the telomere. Functionally, essential regulatory protein in yeast whose DNA-binding sites are found at three types of chromosomal elements: promoters, silencers, and telomeres. RAP1 is also involved in the regulation of telomere structure, where its binding sites are found within the terminal poly[C(1-3)A] sequences. The opposite regulatory functions of RAP1 are not intrinsic to its binding sites but, instead, result from interactions with different factors at promoters and silencers. RAP1 mediates repression of the HM loci and telomeres by recruiting the SIR complex. May also target the binding of RIF1 and RIF2 to silencers and telomeres. Forms with GCR1 a transcriptional activation complex that is required for expression of glycolytic and ribosomal gene. This Saccharomyces cerevisiae (strain ATCC 204508 / S288c) (Baker's yeast) protein is DNA-binding protein RAP1 (RAP1).